The following is a 144-amino-acid chain: Protein MIX23 (144 aa).

At Ala-2 the chain carries N-acetylalanine. A coiled-coil region spans residues 82–120; that stretch reads VKNLREEREKNLDDLTLLKQLRKEQTKLKWMQSELNVEE. Lys-100 is subject to N6-acetyllysine.

The protein belongs to the MIX23 family.

In Homo sapiens (Human), this protein is Protein MIX23.